Here is a 464-residue protein sequence, read N- to C-terminus: tRNA modification GTPase MnmE (464 aa).

3 residues coordinate (6S)-5-formyl-5,6,7,8-tetrahydrofolate: Arg29, Glu91, and Arg131. One can recognise a TrmE-type G domain in the interval 226 to 387 (GLKVALTGKP…LINYLLKKCG (162 aa)). Asn236 provides a ligand contact to K(+). GTP-binding positions include 236–241 (NVGKSS), 255–261 (TDLPGTT), and 280–283 (DTAG). Mg(2+) is bound at residue Ser240. K(+)-binding residues include Thr255, Leu257, and Thr260. Residue Thr261 participates in Mg(2+) binding. Lys464 contacts (6S)-5-formyl-5,6,7,8-tetrahydrofolate.

It belongs to the TRAFAC class TrmE-Era-EngA-EngB-Septin-like GTPase superfamily. TrmE GTPase family. Homodimer. Heterotetramer of two MnmE and two MnmG subunits. The cofactor is K(+).

The protein localises to the cytoplasm. Exhibits a very high intrinsic GTPase hydrolysis rate. Involved in the addition of a carboxymethylaminomethyl (cmnm) group at the wobble position (U34) of certain tRNAs, forming tRNA-cmnm(5)s(2)U34. This chain is tRNA modification GTPase MnmE, found in Prochlorococcus marinus (strain NATL2A).